The sequence spans 310 residues: Calcium homeostasis modulator protein 5 (310 aa).

The next 4 helical transmembrane spans lie at 17–37 (TIGY…FSMV), 49–69 (FPYG…VGFF), 101–121 (LIKV…VALL), and 181–201 (QILG…GTCY).

This sequence belongs to the CALHM family.

The protein resides in the membrane. Functionally, pore-forming subunit of a voltage-gated ion channel. In Danio rerio (Zebrafish), this protein is Calcium homeostasis modulator protein 5 (calhm5.1).